The sequence spans 316 residues: Methionyl-tRNA formyltransferase (316 aa).

Residue 113–116 coordinates (6S)-5,6,7,8-tetrahydrofolate; that stretch reads SLLP.

Belongs to the Fmt family.

The enzyme catalyses L-methionyl-tRNA(fMet) + (6R)-10-formyltetrahydrofolate = N-formyl-L-methionyl-tRNA(fMet) + (6S)-5,6,7,8-tetrahydrofolate + H(+). Functionally, attaches a formyl group to the free amino group of methionyl-tRNA(fMet). The formyl group appears to play a dual role in the initiator identity of N-formylmethionyl-tRNA by promoting its recognition by IF2 and preventing the misappropriation of this tRNA by the elongation apparatus. This is Methionyl-tRNA formyltransferase from Sodalis glossinidius (strain morsitans).